The sequence spans 265 residues: Homeobox protein CDX-1 (265 aa).

Positions 9-152 are disordered; it reads KDSPVYPGPA…GGGGVSGKTR (144 aa). The span at 30 to 43 shows a compositional bias: pro residues; sequence YGPPAPPPAPPQYP. The segment covering 73 to 92 has biased composition (low complexity); the sequence is AAAYGPGPAAPAASPASLAF. Residues 93–108 show a composition bias toward pro residues; that stretch reads GPPPDFSPVPAPPGPG. The span at 110–126 shows a compositional bias: low complexity; it reads GLLAQPLGGPGTPSSPG. Positions 154-213 form a DNA-binding region, homeobox; sequence KDKYRVVYTDHQRLELEKEFHYSRYITIRRKSELAANLGLTERQVKIWFQNRRAKERKVN. An interaction with DNA region spans residues 157 to 178; sequence YRVVYTDHQRLELEKEFHYSRY. Residues 196–207 are interaction with 5-mCpG DNA; sequence RQVKIWFQNRRA. Positions 206 to 217 are enriched in basic residues; sequence RAKERKVNKKKQ. The tract at residues 206 to 265 is disordered; the sequence is RAKERKVNKKKQQQQQPPQPPTAHDITATPARPSLGGLCPSNTSLLATSSPMPVKEEFLP. Residues 245–256 show a composition bias toward polar residues; it reads PSNTSLLATSSP.

The protein belongs to the Caudal homeobox family.

The protein resides in the nucleus. Its function is as follows. Plays a role in transcriptional regulation. Involved in activated KRAS-mediated transcriptional activation of PRKD1 in colorectal cancer (CRC) cells. Binds to the PRKD1 promoter in colorectal cancer (CRC) cells. Could play a role in the terminal differentiation of the intestine. Binds preferentially to methylated DNA. This chain is Homeobox protein CDX-1 (CDX1), found in Pongo pygmaeus (Bornean orangutan).